We begin with the raw amino-acid sequence, 530 residues long: Netrin-G2 (530 aa).

Residues 1–17 form the signal peptide; that stretch reads MLHLLALFLHCLPLASG. Disulfide bonds link Cys-22–Cys-39, Cys-61–Cys-81, and Cys-69–Cys-77. Residues 35–286 enclose the Laminin N-terminal domain; the sequence is EFYACQPKVM…AISNIEVIGR (252 aa). The NGL discriminant loop I stretch occupies residues 69-88; it reads CSHENPYLCSNECDASNPDL. N-linked (GlcNAc...) asparagine glycans are attached at residues Asn-122 and Asn-128. A disulfide bond links Cys-171 and Cys-195. An NGL discriminant loop II region spans residues 201–203; sequence RWA. The segment at 264–267 is NGL discriminant loop III; that stretch reads TYVQ. 15 disulfide bridges follow: Cys-287–Cys-296, Cys-289–Cys-305, Cys-307–Cys-316, Cys-319–Cys-344, Cys-353–Cys-362, Cys-355–Cys-373, Cys-376–Cys-385, Cys-388–Cys-406, Cys-409–Cys-421, Cys-411–Cys-427, Cys-429–Cys-438, Cys-441–Cys-451, Cys-456–Cys-469, Cys-463–Cys-475, and Cys-477–Cys-486. Laminin EGF-like domains are found at residues 287–346, 353–408, and 409–453; these read CKCN…ACAT, CECY…VCIE, and CNCN…GCYP. Asn-310 carries N-linked (GlcNAc...) asparagine glycosylation. An N-linked (GlcNAc...) asparagine glycan is attached at Asn-395. N-linked (GlcNAc...) asparagine glycosylation is present at Asn-422. Gly-507 is lipidated: GPI-anchor amidated glycine. Residues 508-530 constitute a propeptide, removed in mature form; sequence AAPRPATLLGCLLLLGLAARLGR.

Interacts with LRRC4. In terms of processing, N-glycosylated.

It is found in the cell membrane. Functionally, involved in controlling patterning and neuronal circuit formation at the laminar, cellular, subcellular and synaptic levels. Promotes neurite outgrowth of both axons and dendrites. The chain is Netrin-G2 from Homo sapiens (Human).